We begin with the raw amino-acid sequence, 339 residues long: Tryptophan--tRNA ligase (339 aa).

ATP-binding positions include 11-13 (QPT) and 19-20 (GN). The short motif at 12–20 (PTGAIHIGN) is the 'HIGH' region element. Aspartate 135 lines the L-tryptophan pocket. Residues 147-149 (GED), isoleucine 191, and 200-204 (KMSKS) contribute to the ATP site. Positions 200 to 204 (KMSKS) match the 'KMSKS' region motif.

This sequence belongs to the class-I aminoacyl-tRNA synthetase family. In terms of assembly, homodimer.

It is found in the cytoplasm. It catalyses the reaction tRNA(Trp) + L-tryptophan + ATP = L-tryptophyl-tRNA(Trp) + AMP + diphosphate + H(+). Catalyzes the attachment of tryptophan to tRNA(Trp). This chain is Tryptophan--tRNA ligase, found in Prochlorococcus marinus (strain SARG / CCMP1375 / SS120).